Consider the following 108-residue polypeptide: Cytochrome c (108 aa).

Heme c is bound by residues cysteine 19, cysteine 22, histidine 23, and methionine 85.

It belongs to the cytochrome c family. Post-translationally, binds 1 heme c group covalently per subunit.

The protein resides in the mitochondrion intermembrane space. Functionally, electron carrier protein. The oxidized form of the cytochrome c heme group can accept an electron from the heme group of the cytochrome c1 subunit of cytochrome reductase. Cytochrome c then transfers this electron to the cytochrome oxidase complex, the final protein carrier in the mitochondrial electron-transport chain. The sequence is that of Cytochrome c from Stellaria longipes (Longstalk starwort).